The primary structure comprises 260 residues: HTH-type transcriptional repressor NanR (260 aa).

Residues 27–95 enclose the HTH gntR-type domain; sequence KKLSDMVEEE…NGERARVSMP (69 aa). Positions 55-74 form a DNA-binding region, H-T-H motif; the sequence is ERELMEFFNVGRPSVREALA.

This sequence belongs to the NanR family.

Functionally, transcriptional repressor that controls expression of the genes required for the catabolism of sialic acids. The sequence is that of HTH-type transcriptional repressor NanR from Enterobacter sp. (strain 638).